Consider the following 348-residue polypeptide: Putative transport protein HP_0567 (348 aa).

The next 8 helical transmembrane spans lie at 6–26, 27–47, 56–76, 143–163, 194–214, 224–244, 266–286, and 300–320; these read FFWI…QDFL, MDAL…VFLD, SFLC…FIVY, LKLI…FYYG, IVLL…GVMI, LGIL…LIWI, SILL…IVFI, and MLIF…GIIV.

This sequence belongs to the autoinducer-2 exporter (AI-2E) (TC 2.A.86) family.

The protein localises to the cell membrane. The sequence is that of Putative transport protein HP_0567 from Helicobacter pylori (strain ATCC 700392 / 26695) (Campylobacter pylori).